Reading from the N-terminus, the 250-residue chain is MVLIAFGSIGDSFSVGSLKAYVAEFIATLLFVFAGVGSAIAYNKLTADAALDPAGLVAVAVAHAFALFVGVSIAANISGGHLNPAVTLGLAVGGNITILTGFFYWIAQLLGSTVACLLLKYVTNGLAVPTHGVAAGLNGFQGVVMEIIITFALVYTVYATAADPKKGSLGTIAPIAIGFIVGANILAAGPFSGGSMNPARSFGPAVVAGDFSQNWIYWAGPLIGGGLAGFIYGDVFIGCHTPLPTSEDYA.

Helical transmembrane passes span 20 to 42 and 55 to 77; these read AYVAEFIATLLFVFAGVGSAIAY and GLVAVAVAHAFALFVGVSIAANI. The NPA 1 motif lies at 83 to 85; that stretch reads NPA. A run of 3 helical transmembrane segments spans residues 97-119, 140-162, and 172-194; these read TILTGFFYWIAQLLGSTVACLLL, FQGVVMEIIITFALVYTVYATAA, and IAPIAIGFIVGANILAAGPFSGG. Residues 197–199 carry the NPA 2 motif; the sequence is NPA. The chain crosses the membrane as a helical span at residues 215-237; sequence WIYWAGPLIGGGLAGFIYGDVFI.

Belongs to the MIP/aquaporin (TC 1.A.8) family. TIP (TC 1.A.8.10) subfamily. In terms of tissue distribution, roots.

It is found in the vacuole membrane. Channel protein in tonoplast. These proteins may allow the diffusion of amino acids and/or peptides from the vacuolar compartment to the cytoplasm. In Nicotiana tabacum (Common tobacco), this protein is Probable aquaporin TIP-type RB7-18C.